A 308-amino-acid polypeptide reads, in one-letter code: Coenzyme PQQ synthesis protein B (308 aa).

It belongs to the PqqB family.

It participates in cofactor biosynthesis; pyrroloquinoline quinone biosynthesis. Its function is as follows. May be involved in the transport of PQQ or its precursor to the periplasm. In Rhodopseudomonas palustris (strain TIE-1), this protein is Coenzyme PQQ synthesis protein B.